The chain runs to 388 residues: P2X purinoceptor 4 (388 aa).

The Cytoplasmic segment spans residues 1 to 33 (MAGCCSVLGSFLFEYDTPRIVLIRSRKVGLMNR). The chain crosses the membrane as a helical span at residues 34-54 (AVQLLILAYVIGWVFVWEKGY). The Extracellular segment spans residues 55 to 338 (QETDSVVSSV…KFDIIPTMIN (284 aa)). ATP-binding residues include Lys67 and Lys69. 2 residues coordinate CTP: Lys67 and Lys69. N-linked (GlcNAc...) asparagine glycosylation is found at Asn75 and Asn110. Intrachain disulfides connect Cys116/Cys165, Cys126/Cys149, and Cys132/Cys159. N-linked (GlcNAc...) asparagine glycans are attached at residues Asn153 and Asn184. Residues Thr186 and Leu188 each coordinate ATP. Thr186 is a CTP binding site. Asn199 and Asn208 each carry an N-linked (GlcNAc...) asparagine glycan. 2 cysteine pairs are disulfide-bonded: Cys217–Cys227 and Cys261–Cys270. ATP contacts are provided by Asn293, Arg295, and Lys313. CTP is bound by residues Asn293, Arg295, and Lys313. The helical transmembrane segment at 339 to 359 (VGSGLALLGVATVLCDVIVLY) threads the bilayer. The Cytoplasmic portion of the chain corresponds to 360 to 388 (CMKKKYYYRDKKYKYVEDYEQGLSGEMNQ).

It belongs to the P2X receptor family. As to quaternary structure, functional P2RXs are organized as homomeric and heteromeric trimers. Forms heterotrimer with P2RX1. Interacts with P2RX7 (via C-terminus); this interaction is functional only in the presence of ATP. Forms heterotrimer with P2RX4; functional differences between homomeric P2RX4 and P2RX4/6 heterotrimer are minor. Interacts with AP1M2. In terms of tissue distribution, widespread distribution in the brain. Strongly expressed in microglial cells. Also expressed in epithelial cells.

The protein localises to the cell membrane. It localises to the lysosome membrane. The enzyme catalyses K(+)(in) = K(+)(out). It catalyses the reaction Na(+)(in) = Na(+)(out). It carries out the reaction Ca(2+)(in) = Ca(2+)(out). Activated by ATP. pH-dependent and inhibited by acidic pH. Its function is as follows. ATP-gated nonselective transmembrane cation channel permeable to potassium, sodium and calcium. CTP, but not GTP or UTP, functions as a weak affinity agonist for P2RX4. Activated by extracellularly released ATP, it plays multiple role in immunity and central nervous system physiology. Plays a key role in initial steps of T-cell activation and Ca(2+) microdomain formation. Also participates in basal T-cell activity without TCR/CD3 stimulation. Promotes the differentiation and activation of Th17 cells via expression of retinoic acid-related orphan receptor C/RORC. Upon activation, drives microglia motility via the PI3K/Akt pathway. Could also function as an ATP-gated cation channel of lysosomal membranes. This chain is P2X purinoceptor 4 (P2rx4), found in Rattus norvegicus (Rat).